The sequence spans 316 residues: Malate dehydrogenase (316 aa).

NAD(+) is bound by residues 12 to 17 (GAGNIG) and Asp36. Positions 85 and 91 each coordinate substrate. Residues Asn98 and 121–123 (VTN) each bind NAD(+). Substrate is bound by residues Asn123 and Arg154. The Proton acceptor role is filled by His178.

The protein belongs to the LDH/MDH superfamily. MDH type 3 family.

The enzyme catalyses (S)-malate + NAD(+) = oxaloacetate + NADH + H(+). Catalyzes the reversible oxidation of malate to oxaloacetate. The chain is Malate dehydrogenase from Wolbachia sp. subsp. Brugia malayi (strain TRS).